The chain runs to 254 residues: Small ribosomal subunit protein uS2 (254 aa).

Belongs to the universal ribosomal protein uS2 family.

This Oceanobacillus iheyensis (strain DSM 14371 / CIP 107618 / JCM 11309 / KCTC 3954 / HTE831) protein is Small ribosomal subunit protein uS2.